The chain runs to 302 residues: Probable alpha-L-glutamate ligase (302 aa).

Positions 105-288 (LQLLARKGIP…LAGKIIEYIE (184 aa)) constitute an ATP-grasp domain. ATP is bound by residues K142, 179 to 180 (EF), D188, and 212 to 214 (RAN). Mg(2+) is bound by residues D249, E261, and N263. Mn(2+)-binding residues include D249, E261, and N263.

It belongs to the RimK family. The cofactor is Mg(2+). Mn(2+) is required as a cofactor.

The sequence is that of Probable alpha-L-glutamate ligase from Legionella pneumophila (strain Paris).